A 189-amino-acid chain; its full sequence is Threonylcarbamoyl-AMP synthase (189 aa).

One can recognise a YrdC-like domain in the interval 7–189 (NFTVKGLTEQ…DAITGKIIRK (183 aa)).

The protein belongs to the SUA5 family. TsaC subfamily.

The protein localises to the cytoplasm. The enzyme catalyses L-threonine + hydrogencarbonate + ATP = L-threonylcarbamoyladenylate + diphosphate + H2O. In terms of biological role, required for the formation of a threonylcarbamoyl group on adenosine at position 37 (t(6)A37) in tRNAs that read codons beginning with adenine. Catalyzes the conversion of L-threonine, HCO(3)(-)/CO(2) and ATP to give threonylcarbamoyl-AMP (TC-AMP) as the acyladenylate intermediate, with the release of diphosphate. This chain is Threonylcarbamoyl-AMP synthase, found in Blochmanniella floridana.